A 157-amino-acid chain; its full sequence is Protein-export protein SecB (157 aa).

It belongs to the SecB family. As to quaternary structure, homotetramer, a dimer of dimers. One homotetramer interacts with 1 SecA dimer.

Its subcellular location is the cytoplasm. One of the proteins required for the normal export of preproteins out of the cell cytoplasm. It is a molecular chaperone that binds to a subset of precursor proteins, maintaining them in a translocation-competent state. It also specifically binds to its receptor SecA. The sequence is that of Protein-export protein SecB from Dichelobacter nodosus (strain VCS1703A).